The sequence spans 127 residues: uncharacterized protein (127 aa).

This is an uncharacterized protein from Saccharomyces cerevisiae (strain ATCC 204508 / S288c) (Baker's yeast).